Here is a 215-residue protein sequence, read N- to C-terminus: Glutaredoxin 2 (215 aa).

One can recognise a GST N-terminal domain in the interval 1-77 (MKLYIYDHCP…YVDKLDGKPL (77 aa)). Cysteine 9 and cysteine 12 are oxidised to a cystine.

The protein belongs to the glutaredoxin family.

Its function is as follows. Involved in reducing some disulfides in a coupled system with glutathione reductase. Does not act as hydrogen donor for ribonucleotide reductase. The chain is Glutaredoxin 2 (grxB) from Escherichia coli O157:H7.